A 203-amino-acid chain; its full sequence is Dual-action ribosomal maturation protein DarP (203 aa).

Disordered stretches follow at residues 1–31 and 182–203; these read MPPMTRKTRIQPIEPVAEEDDNGYDRPSKSQ and GGASDSDDEAADDAGDDHDDEA. A compositionally biased stretch (acidic residues) spans 186-203; sequence DSDDEAADDAGDDHDDEA.

The protein belongs to the DarP family.

It localises to the cytoplasm. Member of a network of 50S ribosomal subunit biogenesis factors which assembles along the 30S-50S interface, preventing incorrect 23S rRNA structures from forming. Promotes peptidyl transferase center (PTC) maturation. The sequence is that of Dual-action ribosomal maturation protein DarP from Burkholderia cenocepacia (strain HI2424).